A 938-amino-acid polypeptide reads, in one-letter code: Histone deacetylase 7 (938 aa).

Positions 1–40 are disordered; the sequence is MHSPGAGCPALQPDTPGSQPQPMDLRVGQRPTVEPPPEPA. The segment at 1–121 is interaction with MEF2C; it reads MHSPGAGCPA…LAEVILKKQQ (121 aa). 2 transcription repression regions span residues 2–254 and 241–533; these read HSPG…DGDR and GPNP…EHAG. The segment at 72 to 172 is interaction with MEF2A; sequence SMDPPMPELQ…LPTEPPEHFP (101 aa). Serine 132 is modified (phosphoserine). Disordered stretches follow at residues 155 to 280, 331 to 361, 373 to 463, and 472 to 491; these read SFLP…HHGL, SGSG…APLQ, LIKP…DSVL, and RPLS…LSPE. Residue serine 178 is modified to Phosphoserine; by MARK2, MARK3 and PKD/PRKD1. Residues 190–204 show a composition bias toward basic and acidic residues; it reads KSLERRKNPLLRKES. Serine 204 carries the post-translational modification Phosphoserine; by PKD/PRKD2. The span at 220 to 235 shows a compositional bias: low complexity; it reads SSPSSSSTPASGCSSP. Serine 344 carries the post-translational modification Phosphoserine; by PKD/PRKD1. Residues serine 350 and serine 398 each carry the phosphoserine modification. Residues 350-361 are compositionally biased toward low complexity; sequence SATASPLLAPLQ. 2 stretches are compositionally biased toward low complexity: residues 429–448 and 479–491; these read GRGS…EQQH and SSPA…LSPE. A Phosphoserine; by PKD/PRKD1 modification is found at serine 479. Serine 480 carries the phosphoserine modification. The segment at 505 to 852 is histone deacetylase; the sequence is PATGLVYDSV…VAALLGNKVD (348 aa). Zn(2+) contacts are provided by cysteine 520, cysteine 522, and histidine 528. Serine 582 bears the Phosphoserine mark. Cysteine 605 serves as a coordination point for Zn(2+). Residue histidine 657 is part of the active site. Positions 864-938 are interaction with SIN3A; it reads NLSAIRSLEA…LVEEEEPMNL (75 aa). The Nuclear export signal signature appears at 904 to 938; sequence AEVEAVTALASLSVGILAEDRPSERLVEEEEPMNL.

This sequence belongs to the histone deacetylase family. HD type 2 subfamily. Interacts with HDAC1, HDAC2, HDAC3, HDAC4, HDAC5, NCOR1, NCOR2, SIN3A, SIN3B, RBBP4, RBBP7, MTA1L1, SAP30 and MBD3. Interacts with KAT5 and EDNRA. Interacts with the 14-3-3 protein YWHAE, MEF2A, MEF2B and MEF2C. Interacts with ZMYND15. Interacts with KDM5B. Interacts with PML. Interacts with FOXP3. Interacts with RARA. Post-translationally, may be phosphorylated by CaMK1. Phosphorylated by the PKC kinases PKN1 and PKN2, impairing nuclear import. Phosphorylation at Ser-178 by MARK2, MARK3 and PRKD1 promotes interaction with 14-3-3 proteins and export from the nucleus. Phosphorylation at Ser-178 is a prerequisite for phosphorylation at Ser-204. Highly expressed in heart and lung. Expressed at intermediate level in muscle.

Its subcellular location is the nucleus. It is found in the cytoplasm. It carries out the reaction N(6)-acetyl-L-lysyl-[histone] + H2O = L-lysyl-[histone] + acetate. The enzyme catalyses N(6)-acetyl-L-lysyl-[protein] + H2O = L-lysyl-[protein] + acetate. Its activity is regulated as follows. Its activity is inhibited by Trichostatin A (TSA), a known histone deacetylase inhibitor. Functionally, responsible for the deacetylation of lysine residues on the N-terminal part of the core histones (H2A, H2B, H3 and H4). Histone deacetylation gives a tag for epigenetic repression and plays an important role in transcriptional regulation, cell cycle progression and developmental events. Histone deacetylases act via the formation of large multiprotein complexes. Involved in muscle maturation by repressing transcription of myocyte enhancer factors such as MEF2A, MEF2B and MEF2C. During muscle differentiation, it shuttles into the cytoplasm, allowing the expression of myocyte enhancer factors. Positively regulates the transcriptional repressor activity of FOXP3. Serves as a corepressor of RARA, causing its deacetylation and inhibition of RARE DNA element binding. In association with RARA, plays a role in the repression of microRNA-10a and thereby in the inflammatory response. Also acetylates non-histone proteins, such as ALKBH5. This is Histone deacetylase 7 (Hdac7) from Mus musculus (Mouse).